The following is a 1613-amino-acid chain: MGAVLRSLLACSFCVLLRAAPLLLYANRRDLRLVDATNGKENATIVVGGLEDAAAVDFVFGHGLIYWSDVSEEAIKRTEFNKSESVQNVVVSGLLSPDGLACDWLGEKLYWTDSETNRIEVSNLDGSLRKVLFWQELDQPRAIALDPSSGFMYWTDWGEVPKIERAGMDGSSRFVIINTEIYWPNGLTLDYQERKLYWADAKLNFIHKSNLDGTNRQAVVKGSLPHPFALTLFEDTLYWTDWNTHSILACNKYTGEGLREIHSNIFSPMDIHAFSQQRQPNATNPCGIDNGGCSHLCLMSPVKPFYQCACPTGVKLMENGKTCKDGATELLLLARRTDLRRISLDTPDFTDIVLQLEDIRHAIAIDYDPVEGYIYWTDDEVRAIRRSFIDGSGSQFVVTAQIAHPDGIAVDWVARNLYWTDTGTDRIEVTRLNGTMRKILISEDLEEPRAIVLDPMVGYMYWTDWGEIPKIERAALDGSDRVVLVNTSLGWPNGLALDYDEGTIYWGDAKTDKIEVMNTDGTGRRVLVEDKIPHIFGFTLLGDYVYWTDWQRRSIERVHKRSAEREVIIDQLPDLMGLKATSVHRVIGSNPCAEDNGGCSHLCLYRPQGLRCACPIGFELIGDMKTCIVPEAFLLFSRRADIRRISLETNNNNVAIPLTGVKEASALDFDVTDNRIYWTDISLKTISRAFMNGSALEHVVEFGLDYPEGMAVDWLGKNLYWADTGTNRIEVSKLDGQHRQVLVWKDLDSPRALALDPAEGFMYWTEWGGKPKIDRAAMDGSERTTLVPNVGRANGLTIDYAKRRLYWTDLDTNLIESSDMLGLNREVIADDLPHPFGLTQYQDYIYWTDWSRRSIERANKTSGQNRTIIQGHLDYVMDILVFHSSRQAGWNECASSNGHCSHLCLAVPVGGFVCGCPAHYSLNADNRTCSAPSTFLLFSQKSAINRMVIDEQQSPDIILPIHSLRNVRAIDYDPLDKQLYWIDSRQNSIRKAHEDGGQGFNVVANSVANQNLEIQPYDLSIDIYSRYIYWTCEATNVIDVTRLDGRSVGVVLKGEQDRPRAIVVNPEKGYMYFTNLQERSPKIERAALDGTEREVLFFSGLSKPIALALDSKLGKLFWADSDLRRIESSDLSGANRIVLEDSNILQPVGLTVFENWLYWIDKQQQMIEKIDMTGREGRTKVQARIAQLSDIHAVKELNLQEYRQHPCAQDNGGCSHICLVKGDGTTRCSCPMHLVLLQDELSCGEPPTCSPQQFTCFTGDIDCIPVAWRCDGFTECEDHSDELNCPVCSESQFQCASGQCIDGALRCNGDANCQDKSDEKNCEVLCLIDQFRCANGQCVGKHKKCDHSVDCSDRSDELDCYPTEEPAPQATNTVGSVIGVIVTIFVSGTIYFICQRMLCPRMKGDGETMTNDYVVHSPASVPLGYVPHPSSLSGSLPGMSRGKSMISSLSIMGGSSGPPYDRAHVTGASSSSSSSTKGTYFPAILNPPPSPATERSHYTMEFGYSSNSPSTHRSYSYRPYSYRHFAPPTTPCSTDVCDSDYAPSRRMTSVATAKGYTSDVNYDSEPVPPPPTPRSQYLSAEENYESCPPSPYTERSYSHHLYPPPPSPCTDSS.

A signal peptide spans methionine 1–alanine 19. The tract at residues alanine 20–serine 275 is beta-propeller 1. Topologically, residues alanine 20–alanine 1370 are extracellular. Asparagine 42 and asparagine 81 each carry an N-linked (GlcNAc...) asparagine glycan. LDL-receptor class B repeat units lie at residues glycine 63–glycine 106, glutamate 107–serine 149, glycine 150–glutamate 193, arginine 194–aspartate 235, and threonine 236–glutamine 277. Asparagine 281 carries N-linked (GlcNAc...) asparagine glycosylation. Positions alanine 282–lysine 324 constitute an EGF-like 1 domain. 3 disulfides stabilise this stretch: cysteine 286-cysteine 297, cysteine 293-cysteine 308, and cysteine 310-cysteine 323. Positions threonine 328–serine 589 are beta-propeller 2. 5 LDL-receptor class B repeats span residues glycine 372–alanine 414, arginine 415–valine 457, glycine 458–glutamate 501, glycine 502–glycine 542, and aspartate 543–isoleucine 587. N-linked (GlcNAc...) asparagine glycans are attached at residues asparagine 433 and asparagine 486. The EGF-like 2 domain occupies glycine 588–isoleucine 628. Disulfide bonds link cysteine 592–cysteine 603, cysteine 599–cysteine 612, and cysteine 614–cysteine 627. A beta-propeller 3 region spans residues glutamate 631 to tryptophan 890. 5 LDL-receptor class B repeats span residues asparagine 674–glycine 716, lysine 717–glutamate 759, glycine 760–lysine 802, arginine 803–glutamine 842, and aspartate 843–serine 885. An N-linked (GlcNAc...) asparagine glycan is attached at asparagine 692. Residues asparagine 859 and asparagine 865 are each glycosylated (N-linked (GlcNAc...) asparagine). The region spanning glycine 889 to serine 930 is the EGF-like 3 domain. Intrachain disulfides connect cysteine 893/cysteine 904, cysteine 900/cysteine 914, and cysteine 916/cysteine 929. An N-linked (GlcNAc...) asparagine glycan is attached at asparagine 926. Residues serine 933–tyrosine 1202 form a beta-propeller 4 region. LDL-receptor class B repeat units follow at residues lysine 977–serine 1025, arginine 1026–lysine 1068, glycine 1069–leucine 1113, glycine 1114–tryptophan 1156, and leucine 1157–asparagine 1198. An EGF-like 4 domain is found at arginine 1203–glycine 1244. Cystine bridges form between cysteine 1207–cysteine 1218, cysteine 1214–cysteine 1228, cysteine 1230–cysteine 1243, cysteine 1249–cysteine 1263, cysteine 1256–cysteine 1276, cysteine 1270–cysteine 1285, cysteine 1288–cysteine 1300, cysteine 1295–cysteine 1313, cysteine 1307–cysteine 1322, cysteine 1326–cysteine 1338, cysteine 1333–cysteine 1351, and cysteine 1345–cysteine 1360. 3 consecutive LDL-receptor class A domains span residues threonine 1248 to proline 1286, valine 1287 to glutamate 1323, and leucine 1325 to tyrosine 1361. A helical membrane pass occupies residues threonine 1371–isoleucine 1393. 2 S-palmitoyl cysteine lipidation sites follow: cysteine 1394 and cysteine 1399. The Cytoplasmic portion of the chain corresponds to cysteine 1394–serine 1613. Residue lysine 1403 forms a Glycyl lysine isopeptide (Lys-Gly) (interchain with G-Cter in ubiquitin) linkage. Residues serine 1420 and serine 1430 each carry the phosphoserine; by CK1 modification. Threonine 1479 carries the post-translational modification Phosphothreonine. Residues proline 1487–threonine 1493 carry the PPPSP motif A motif. A Phosphoserine; by CDK14, GRK5 and GRK6 modification is found at serine 1490. A Phosphothreonine; by CK1 modification is found at threonine 1493. Positions proline 1527–threonine 1534 match the PPPSP motif B motif. The disordered stretch occupies residues tyrosine 1556–serine 1613. The PPPSP motif C motif lies at proline 1568 to serine 1575. Residues proline 1588–threonine 1593 carry the PPPSP motif D motif. Over residues tyrosine 1602 to serine 1613 the composition is skewed to pro residues. The PPPSP motif E motif lies at proline 1603–threonine 1610.

It belongs to the LDLR family. Homodimer; disulfide-linked. Forms phosphorylated oligomer aggregates on Wnt-signaling. Component of the Wnt-Fzd-LRP5-LRP6 complex. Interacts (via the extracellular domain) with WNT1; the interaction is enhanced by prior formation of the Wnt/Fzd complex. Interacts (via the beta-propeller regions 3 and 4) with WNT3A. Interacts (via the beta-propeller regions 1 and 2) with WNT9B. Interacts with FZD5; the interaction forms a coreceptor complex for Wnt signaling and is inhibited by DKK1 and DRAXIN. Interacts (via beta propeller region) with DKK1; the interaction inhibits FZD5/LRP6 complex formation. Interacts with DKK2. Interacts (via the phosphorylated PPPSP motifs) with AXIN1; the interaction recruits the AXIN1/GSK3B complex to cell surface LRP6 signalosomes. Interacts (via the extracellular domain) with RSPO1; the interaction activates Wnt/beta-catenin signaling. Interacts (via the extracellular domain) with RSPO3 (via the cysteine rich domain); the interaction activates Wnt/beta-catenin signaling. Interacts (via the beta-propeller regions 1 and 2) with SOST; the interaction competes with DKK1 for binding for inhibiting beta-catenin signaling. Interacts (via the cytoplasmic domain) with CSNKIE; the interaction phosphorylates LRP6, binds AXIN1 and inhibits AXIN1/GSK3B-mediated phosphorylation of beta-catenin. Interacts with DRAXIN; the interaction inhibits Wnt signaling. Interacts with GRB10; the interaction prevents AXIN1 binding, thus negatively regulating the Wnt signaling pathway. Interacts with MESD; the interaction prevents the formation of LRP6 aggregates and targets LRP6 to the plasma membrane. Interacts with MACF1. Interacts with DAB2; the interaction involves LRP6 phosphorylation by CK2 and sequesters LRP6 towards clathrin-mediated endocytosis. Interacts with TMEM198. Interacts with CAPRIN2; the interaction promotes LRP6 phosphorylation at Ser-1490. Found in a complex with CAPRIN2, CCNY and CDK14 during G2/M stage; CAPRIN2 functions as a scaffold for the complex by binding to CCNY via its N terminus and to CDK14 via its C terminus. Interacts with LYPD6 (via NxI motif). Forms a ternary complex with DKK1 and KREM1. Interacts with KREM1 in a DKK1-dependent manner. Interacts with MDK: this interaction is calcium dependent. Interacts with LMBR1L. Interacts with GPR37; this interaction promotes LRP6 maturation. Dual phosphorylation of cytoplasmic PPPSP motifs sequentially by GSK3 and CK1 is required for AXIN1-binding, and subsequent stabilization and activation of beta-catenin via preventing GSK3-mediated phosphorylation of beta-catenin. Phosphorylated, in vitro, by GRK5/6 within and outside the PPPSP motifs. Phosphorylation at Ser-1490 by CDK14 during G2/M phase leads to regulation of the Wnt signaling pathway during the cell cycle. Phosphorylation by GSK3B is induced by RPSO1 binding and inhibited by DKK1. Phosphorylated, in vitro, by casein kinase I on Thr-1479. Post-translationally, undergoes gamma-secretase-dependent regulated intramembrane proteolysis (RIP). The extracellular domain is first released by shedding, and then, through the action of gamma-secretase, the intracellular domain (ICD) is released into the cytoplasm where it is free to bind to GSK3B and to activate canonical Wnt signaling. In terms of processing, palmitoylation on the two sites near the transmembrane domain leads to release of LRP6 from the endoplasmic reticulum. Mono-ubiquitinated which retains LRP6 in the endoplasmic reticulum. Ubiquitinated by ZNRF3, leading to its degradation by the proteasome. Post-translationally, N-glycosylation is required for cell surface location. Expressed in early embryo. Broadly expressed throughout the embryonic ectoderm and in nascent mesoderm, and in endoderm emerging from the primitive streak.

It is found in the cell membrane. The protein localises to the endoplasmic reticulum. Its subcellular location is the membrane raft. Component of the Wnt-Fzd-LRP5-LRP6 complex that triggers beta-catenin signaling through inducing aggregation of receptor-ligand complexes into ribosome-sized signalosomes. Cell-surface coreceptor of Wnt/beta-catenin signaling, which plays a pivotal role in bone formation. The Wnt-induced Fzd/LRP6 coreceptor complex recruits DVL1 polymers to the plasma membrane which, in turn, recruits the AXIN1/GSK3B-complex to the cell surface promoting the formation of signalosomes and inhibiting AXIN1/GSK3-mediated phosphorylation and destruction of beta-catenin. Required for posterior patterning of the epiblast during gastrulation. This Mus musculus (Mouse) protein is Low-density lipoprotein receptor-related protein 6 (Lrp6).